The primary structure comprises 371 residues: Peptide chain release factor 2 (371 aa).

Gln253 bears the N5-methylglutamine mark.

The protein belongs to the prokaryotic/mitochondrial release factor family. Post-translationally, methylated by PrmC. Methylation increases the termination efficiency of RF2.

Its subcellular location is the cytoplasm. Functionally, peptide chain release factor 2 directs the termination of translation in response to the peptide chain termination codons UGA and UAA. In Mycobacterium bovis (strain ATCC BAA-935 / AF2122/97), this protein is Peptide chain release factor 2 (prfB).